A 343-amino-acid chain; its full sequence is Mas-related G-protein coupled receptor member F (343 aa).

Residues 1 to 44 lie on the Extracellular side of the membrane; it reads MAGNCSWEAHSTNQNKMCPGMSEALELYSRGFLTIEQIATLPPP. N-linked (GlcNAc...) asparagine glycosylation is present at asparagine 4. The helical transmembrane segment at 45–66 threads the bilayer; it reads AVTNYIFLLLCLCGLVGNGLVL. The Cytoplasmic segment spans residues 67–82; it reads WFFGFSIKRTPFSIYF. The helical transmembrane segment at 83 to 104 threads the bilayer; it reads LHLASADGIYLFSKAVIALLNM. Residues 105 to 123 are Extracellular-facing; sequence GTFLGSFPDYVRRVSRIVG. The helical transmembrane segment at 124–144 threads the bilayer; that stretch reads LCTFFAGVSLLPAISIERCVS. The Cytoplasmic segment spans residues 145 to 160; sequence VIFPMWYWRRRPKRLS. The chain crosses the membrane as a helical span at residues 161-181; the sequence is AGVCALLWLLSFLVTSIHNYF. At 182–198 the chain is on the extracellular side; the sequence is CMFLGHEASGTACLNMD. Residues 199–220 form a helical membrane-spanning segment; sequence ISLGILLFFLFCPLMVLPCLAL. Over 221–241 the chain is Cytoplasmic; the sequence is ILHVECRARRRQRSAKLNHVV. Residues 242–263 traverse the membrane as a helical segment; it reads LAIVSVFLVSSIYLGIDWFLFW. Over 264 to 273 the chain is Extracellular; the sequence is VFQIPAPFPE. The helical transmembrane segment at 274–294 threads the bilayer; it reads YVTDLCICINSSAKPIVYFLA. Residues 295–343 lie on the Cytoplasmic side of the membrane; sequence GRDKSQRLWEPLRVVFQRALRDGAEPGDAASSTPNTVTMEMQCPSGNAS. A disordered region spans residues 318–343; that stretch reads AEPGDAASSTPNTVTMEMQCPSGNAS. Residues 324–343 are compositionally biased toward polar residues; it reads ASSTPNTVTMEMQCPSGNAS.

It belongs to the G-protein coupled receptor 1 family. Mas subfamily. Gut, vas deferens, uterus and aorta; barely detectable in liver, kidney, lung, and salivary gland. In the brain, markedly abundant in the cerebellum.

The protein resides in the cell membrane. Orphan receptor. May bind to a neuropeptide and may regulate nociceptor function and/or development, including the sensation or modulation of pain. The polypeptide is Mas-related G-protein coupled receptor member F (Mrgprf) (Rattus norvegicus (Rat)).